The chain runs to 400 residues: Acetate kinase (400 aa).

Residue Asn-10 coordinates Mg(2+). Residue Lys-17 participates in ATP binding. Residue Arg-91 coordinates substrate. Asp-150 acts as the Proton donor/acceptor in catalysis. ATP-binding positions include 210–214 (HLGNG), 285–287 (DCR), and 333–337 (GIGEN). Glu-387 is a Mg(2+) binding site.

It belongs to the acetokinase family. In terms of assembly, homodimer. Requires Mg(2+) as cofactor. It depends on Mn(2+) as a cofactor.

The protein resides in the cytoplasm. It catalyses the reaction acetate + ATP = acetyl phosphate + ADP. The protein operates within metabolic intermediate biosynthesis; acetyl-CoA biosynthesis; acetyl-CoA from acetate: step 1/2. Catalyzes the formation of acetyl phosphate from acetate and ATP. Can also catalyze the reverse reaction. The protein is Acetate kinase of Yersinia pestis bv. Antiqua (strain Antiqua).